Consider the following 132-residue polypeptide: MRHRKSGRQLNRNSSHRQAMFRNMASSLVRHEVIKTTVAKAKELRRVVEPLITLAKSDSVANRRLAFARTRDAEVVGKLFNELGPRYQERPGGYTRILKCGLRTGDKAPMAFIELVGRPEDAEAVEADDSAE.

It belongs to the bacterial ribosomal protein bL17 family. In terms of assembly, part of the 50S ribosomal subunit. Contacts protein L32.

In Shewanella sediminis (strain HAW-EB3), this protein is Large ribosomal subunit protein bL17.